We begin with the raw amino-acid sequence, 152 residues long: SsrA-binding protein (152 aa).

This sequence belongs to the SmpB family.

Its subcellular location is the cytoplasm. Required for rescue of stalled ribosomes mediated by trans-translation. Binds to transfer-messenger RNA (tmRNA), required for stable association of tmRNA with ribosomes. tmRNA and SmpB together mimic tRNA shape, replacing the anticodon stem-loop with SmpB. tmRNA is encoded by the ssrA gene; the 2 termini fold to resemble tRNA(Ala) and it encodes a 'tag peptide', a short internal open reading frame. During trans-translation Ala-aminoacylated tmRNA acts like a tRNA, entering the A-site of stalled ribosomes, displacing the stalled mRNA. The ribosome then switches to translate the ORF on the tmRNA; the nascent peptide is terminated with the 'tag peptide' encoded by the tmRNA and targeted for degradation. The ribosome is freed to recommence translation, which seems to be the essential function of trans-translation. The protein is SsrA-binding protein of Lactobacillus helveticus (strain DPC 4571).